The chain runs to 154 residues: uncharacterized protein (154 aa).

Transmembrane regions (helical) follow at residues 39–61 (LLIF…FFAR), 65–87 (LPYI…VSLL), 94–113 (VESL…RVFI), and 128–150 (LLIN…SPFT).

It is found in the cell membrane. This is an uncharacterized protein from Aquifex aeolicus (strain VF5).